We begin with the raw amino-acid sequence, 1457 residues long: MDVAAAALPAFVALWLLYPWPLLGSALGQFSAGGCTFDDGPGACDYHQDLYDDFEWVHVSAQEPHYLPPEMPQGSYMVVDSSNHDPGEKARLQLPTMKENDTHCIDFSYLLYSQKGLNPGTLNILVRVNKGPLANPIWNVTGFTGRDWLRAELAVSTFWPNEYQVIFEAEVSGGRSGYIAIDDIQVLSYPCDKSPHFLRLGDVEVNAGQNATFQCIATGRDAVHNKLWLQRRNGEDIPVAQTKNINHRRFAASFRLQEVTKTDQDLYRCVTQSERGSGVSNFAQLIVREPPRPIAPPQLLGVGPTYLLIQLNANSIIGDGPIILKEVEYRMTSGSWTETHAVNAPTYKLWHLDPDTEYEIRVLLTRPGEGGTGLPGPPLITRTKCAEPMRTPKTLKIAEIQARRIAVDWESLGYNITRCHTFNVTICYHYFRGHNESRADCLDMDPKAPQHVVNHLPPYTNVSLKMILTNPEGRKESEETIIQTDEDVPGPVPVKSLQGTSFENKIFLNWKEPLEPNGIITQYEVSYSSIRSFDPAVPVAGPPQTVSNLWNSTHHVFMHLHPGTTYQFFIRASTVKGFGPATAINVTTNISAPSLPDYEGVDASLNETATTITVLLRPAQAKGAPISAYQIVVEQLHPHRTKREAGAMECYQVPVTYQNALSGGAPYYFAAELPPGNLPEPAPFTVGDNRTYKGFWNPPLAPRKGYNIYFQAMSSVEKETKTQCVRIATKAAATEEPEVIPDPAKQTDRVVKIAGISAGILVFILLLLVVIVIVKKSKLAKKRKDAMGNTRQEMTHMVNAMDRSYADQSTLHAEDPLSLTFMDQHNFSPRLPNDPLVPTAVLDENHSATAESSRLLDVPRYLCEGTESPYQTGQLHPAIRVADLLQHINLMKTSDSYGFKEEYESFFEGQSASWDVAKKDQNRAKNRYGNIIAYDHSRVILQPVEDDPSSDYINANYIDIWLYRDGYQRPSHYIATQGPVHETVYDFWRMVWQEQSACIVMVTNLVEVGRVKCYKYWPDDTEVYGDFKVTCVEMEPLAEYVVRTFTLERRGYNEIREVKQFHFTGWPDHGVPYHATGLLSFIRRVKLSNPPSAGPIVVHCSAGAGRTGCYIVIDIMLDMAEREGVVDIYNCVKALRSRRINMVQTEEQYIFIHDAILEACLCGETAIPVCEFKAAYFDMIRIDSQTNSSHLKDEFQTLNSVTPRLQAEDCSIACLPRNHDKNRFMDMLPPDRCLPFLITIDGESSNYINAALMDSYRQPAAFIVTQYPLPNTVKDFWRLVYDYGCTSIVMLNEVDLSQGCPQYWPEEGMLRYGPIQVECMSCSMDCDVINRIFRICNLTRPQEGYLMVQQFQYLGWASHREVPGSKRSFLKLILQVEKWQEECEEGEGRTIIHCLNGGGRSGMFCAIGIVVEMVKRQNVVDVFHAVKTLRNSKPNMVEAPEQYRFCYDVALEYLESS.

An N-terminal signal peptide occupies residues 1 to 25; that stretch reads MDVAAAALPAFVALWLLYPWPLLGS. The Extracellular portion of the chain corresponds to 26-752; the sequence is ALGQFSAGGC…PAKQTDRVVK (727 aa). In terms of domain architecture, MAM spans 30-193; it reads FSAGGCTFDD…IQVLSYPCDK (164 aa). 3 N-linked (GlcNAc...) asparagine glycosylation sites follow: N100, N139, and N210. Residues 195–280 enclose the Ig-like C2-type domain; it reads PHFLRLGDVE…TQSERGSGVS (86 aa). A disulfide bridge connects residues C215 and C269. Fibronectin type-III domains lie at 293–388, 391–487, 490–594, and 595–688; these read PIAP…CAEP, TPKT…TDED, GPVP…SAPS, and LPDY…TVGD. N-linked (GlcNAc...) asparagine glycans are attached at residues N415, N423, N435, N461, N551, N585, N589, N606, and N689. Residues 753–774 form a helical membrane-spanning segment; the sequence is IAGISAGILVFILLLLVVIVIV. Topologically, residues 775–1457 are cytoplasmic; that stretch reads KKSKLAKKRK…DVALEYLESS (683 aa). S868 carries the post-translational modification Phosphoserine. 2 Tyrosine-protein phosphatase domains span residues 899–1159 and 1191–1453; these read FKEE…ILEA and LKDE…ALEY. Substrate is bound by residues D1068, 1100 to 1106, and Q1144; that span reads CSAGAGR. The active-site Phosphocysteine intermediate is the C1100. The active-site Phosphocysteine intermediate is C1394.

The protein belongs to the protein-tyrosine phosphatase family. Receptor class 2B subfamily. This protein undergoes proteolytic processing. As to expression, high levels in liver and kidney. Lower levels in lung, brain and heart. Not seen in spleen and testis.

The protein resides in the membrane. The enzyme catalyses O-phospho-L-tyrosyl-[protein] + H2O = L-tyrosyl-[protein] + phosphate. Regulation of processes involving cell contact and adhesion such as growth control, tumor invasion, and metastasis. Negative regulator of EGFR signaling pathway. Forms complexes with beta-catenin and gamma-catenin/plakoglobin. Beta-catenin may be a substrate for the catalytic activity of PTPRK/PTP-kappa. This is Receptor-type tyrosine-protein phosphatase kappa (Ptprk) from Mus musculus (Mouse).